The following is a 695-amino-acid chain: ATP-dependent zinc metalloprotease FTSH 2, chloroplastic (695 aa).

Residues 1–47 constitute a chloroplast transit peptide; the sequence is MAASSACLVGNGLSVNTTTKQRLSKHFSGRQTSFSSVIRTSKVNVVK. The N-terminal 35 residues, 48 to 82, are a transit peptide targeting the thylakoid; the sequence is ASLDGKKKQEGRRDFLKILLGNAGVGLVASGKANA. Over 83-167 the chain is Lumenal, thylakoid; that stretch reads DEQGVSSSRM…AHNAQEDQGS (85 aa). The chain crosses the membrane as a helical span at residues 168–188; it reads VLFNLIGNLAFPALLIGGLFL. At 189–695 the chain is on the stromal side; it reads LSRRSGGGMG…PASAPTPAAV (507 aa). Position 267–274 (267–274) interacts with ATP; the sequence is GPPGTGKT. Zn(2+) is bound at residue histidine 488. Residue glutamate 489 is part of the active site. The Zn(2+) site is built by histidine 492 and aspartate 566. Residues 673 to 695 form a disordered region; sequence PPENRVPSSTTTTPASAPTPAAV. The segment covering 679-695 has biased composition (low complexity); sequence PSSTTTTPASAPTPAAV.

In the N-terminal section; belongs to the AAA ATPase family. It in the C-terminal section; belongs to the peptidase M41 family. As to quaternary structure, interacts with CHIP and FTSH5. Heterohexamers with FTSH1, FTSH5 and FTSH8. May also form homooligomers. It depends on Zn(2+) as a cofactor. In terms of processing, the FTSH2 precursor is ubiquitinated by CHIP in the cytoplasm. As to expression, expressed in cotyledons, cauline and rosette leaves, stems, sepals, flovers and siliques. Very low in roots.

It is found in the plastid. Its subcellular location is the chloroplast thylakoid membrane. Functionally, part of a complex that function as an ATP-dependent zinc metallopeptidase. Involved in the thylakoid formation and in the removal of damaged D1 in the photosystem II, preventing cell death under high-intensity light conditions, but not involved in thermotolerance. This Arabidopsis thaliana (Mouse-ear cress) protein is ATP-dependent zinc metalloprotease FTSH 2, chloroplastic (FTSH2).